A 224-amino-acid polypeptide reads, in one-letter code: ATP synthase subunit a (224 aa).

The next 6 membrane-spanning stretches (helical) occupy residues 17–37 (LSLN…IYWL), 72–92 (IFIS…FPYI), 99–119 (LTLT…YGWI), 125–145 (MFAH…MVCI), 170–190 (LLLT…VTFL), and 195–215 (IALL…FAVL).

This sequence belongs to the ATPase A chain family. In terms of assembly, F-type ATPases have 2 components, CF(1) - the catalytic core - and CF(0) - the membrane proton channel. CF(1) has five subunits: alpha(3), beta(3), gamma(1), delta(1), epsilon(1). CF(0) has three main subunits: a, b and c.

The protein localises to the mitochondrion inner membrane. Functionally, mitochondrial membrane ATP synthase (F(1)F(0) ATP synthase or Complex V) produces ATP from ADP in the presence of a proton gradient across the membrane which is generated by electron transport complexes of the respiratory chain. F-type ATPases consist of two structural domains, F(1) - containing the extramembraneous catalytic core and F(0) - containing the membrane proton channel, linked together by a central stalk and a peripheral stalk. During catalysis, ATP synthesis in the catalytic domain of F(1) is coupled via a rotary mechanism of the central stalk subunits to proton translocation. Key component of the proton channel; it may play a direct role in the translocation of protons across the membrane. This is ATP synthase subunit a (mt:ATPase6) from Drosophila mauritiana (Fruit fly).